A 307-amino-acid chain; its full sequence is RHOMBOID-like protein 6, mitochondrial (307 aa).

Residues 1–62 (MRSRDMERGR…DCVAKLLRRF (62 aa)) constitute a mitochondrion transit peptide. 6 consecutive transmembrane segments (helical) span residues 105–125 (WLHAGIIHLVMNMFDVIIFGI), 136–156 (IGLIYLISGFGGSILSALFLQ), 159–179 (ISVGASGALLGLMGAMLSELL), 191–211 (ALLSFLFIIAINLAIGLLPWV), 214–234 (FAHIGGLLTGFCLGFILLMQP), and 262–282 (LFFVAAVLVVAGLTVGLVMLF). Serine 164 (nucleophile) is an active-site residue. Residue histidine 216 is the Charge relay system of the active site.

This sequence belongs to the peptidase S54 family.

The protein localises to the mitochondrion membrane. It carries out the reaction Cleaves type-1 transmembrane domains using a catalytic dyad composed of serine and histidine that are contributed by different transmembrane domains.. Probable rhomboid-type serine protease that catalyzes intramembrane proteolysis. Might be involved in response to abiotic stimuli. The chain is RHOMBOID-like protein 6, mitochondrial from Arabidopsis thaliana (Mouse-ear cress).